A 205-amino-acid polypeptide reads, in one-letter code: Heme-binding protein 2 (205 aa).

Residues 1–37 (MAEEPEPDLGVAEGSEDQALEMPSWKAPEDIDPQPGS) form a disordered region. Ala2 carries the post-translational modification N-acetylalanine. Residue Ser181 is modified to Phosphoserine.

Belongs to the HEBP family. Monomer. Interacts with LRPPRC. May interact with BCL2L1; an interaction with BCL2L1 was observed using a peptide, but not with the full-length protein. The full-length protein would have to undergo a major conformation change for the interaction to occur. Interacts with PDCD6.

It is found in the cytoplasm. The protein localises to the mitochondrion. Functionally, can promote mitochondrial permeability transition and facilitate necrotic cell death under different types of stress conditions. May have low affinity for heme. In Mus musculus (Mouse), this protein is Heme-binding protein 2 (Hebp2).